A 742-amino-acid polypeptide reads, in one-letter code: 2'-5'-oligoadenylate synthase 2 (742 aa).

The tract at residues 1–35 (MGNWLTGNWSSDRSSGYSSGWSPGGSSGVPSGPVH) is disordered. Gly2 carries the N-myristoyl glycine lipid modification. Residues 10 to 21 (SSDRSSGYSSGW) are compositionally biased toward low complexity. OAS domain stretches follow at residues 60-374 (VPSQ…YWDV) and 382-721 (TPSH…WKVP). Lys417 bears the N6-acetyllysine mark. Residue Ser436 participates in ATP binding. Mg(2+)-binding residues include Asp448, Asp450, and Asp519. The ATP site is built by Arg582 and Lys585.

The protein belongs to the 2-5A synthase family. Homodimer. Mg(2+) serves as cofactor. Post-translationally, myristoylation is not essential for its activity. Glycosylated. Glycosylation is essential for its activity. Expressed in the uterus. Expressed in mammary glands: expressed at low level before the establishment of lactation, then expression strongly increases, and subsequently decreases during early involution.

The protein localises to the cytoplasm. It is found in the perinuclear region. The enzyme catalyses 3 ATP = 5'-triphosphoadenylyl-(2'-&gt;5')-adenylyl-(2'-&gt;5')-adenosine + 2 diphosphate. Produced as a latent enzyme which is activated by double stranded RNA (dsRNA) generated during the course of viral infection. The dsRNA activator must be at least 15 nucleotides long, and no modification of the 2'-hydroxyl group is tolerated. ssRNA or dsDNA do not act as activators. Strongly inhibited by copper, iron and zinc ions. Partially inhibited by cobalt and nickel ions. Its function is as follows. Interferon-induced, dsRNA-activated antiviral enzyme which plays a critical role in cellular innate antiviral response. Activated by detection of double stranded RNA (dsRNA): polymerizes higher oligomers of 2'-5'-oligoadenylates (2-5A) from ATP which then bind to the inactive monomeric form of ribonuclease L (RNASEL) leading to its dimerization and subsequent activation. Activation of RNASEL leads to degradation of cellular as well as viral RNA, resulting in the inhibition of protein synthesis, thus terminating viral replication. Can mediate the antiviral effect via the classical RNASEL-dependent pathway or an alternative antiviral pathway independent of RNASEL. In addition, it may also play a role in other cellular processes such as apoptosis, cell growth, differentiation and gene regulation. May act as a negative regulator of lactation, stopping lactation in virally infected mammary gland lobules, thereby preventing transmission of viruses to neonates. Non-infected lobules would not be affected, allowing efficient pup feeding during infection. The chain is 2'-5'-oligoadenylate synthase 2 from Mus musculus (Mouse).